Consider the following 1099-residue polypeptide: SLIT-ROBO Rho GTPase-activating protein 3 (1099 aa).

The F-BAR domain occupies 19-314; sequence AQIKEIRTQL…AVDNLDSRSD (296 aa). The disordered stretch occupies residues 205-225; the sequence is HEDRPQRRSSVKKIEKMKEKR. The stretch at 352-392 forms a coiled coil; the sequence is QTELLMRYHQLQSRLATLKIENEEVRKTLDATMQTLQDMLT. Residues 471–493 are disordered; the sequence is ERAECGTTRPPCLPPKPQKMRRP. The Rho-GAP domain occupies 506-694; the sequence is GSMEAFIKDS…TIIIHHEAIF (189 aa). Positions 744–803 constitute an SH3 domain; sequence VEQIEAIAKFDYMGRSPRELSFKKGASLLLYHRASEDWWEGRHNGVDGLIPHQYIVVQDM. The span at 809–820 shows a compositional bias: polar residues; the sequence is DSLSQKADSEAS. Residues 809-847 form a disordered region; it reads DSLSQKADSEASSGPLLDDKASSKNDLQSPTEHISDYGF. Phosphoserine is present on residues Ser817, Ser820, Ser821, Ser837, and Ser858. Disordered regions lie at residues 861–911 and 926–950; these read AAIP…SPEK and PDKK…SSLG. Residues 926–936 are compositionally biased toward basic and acidic residues; it reads PDKKALSEGHS. Polar residues predominate over residues 937 to 947; sequence MRSTCGSTRHS. Positions 952–987 form a coiled coil; sequence HKSLEAEALAEDIEKTMSTALHELRELERQNTVKQA. Ser954 carries the phosphoserine modification. Residues 995–1099 are disordered; that stretch reads LEPLKNPPGP…NSSADKSGTM (105 aa). 2 stretches are compositionally biased toward low complexity: residues 1026–1038 and 1060–1074; these read RRSS…MMTT and VRPV…SSSS. A compositionally biased stretch (polar residues) spans 1089–1099; sequence PNSSADKSGTM.

In terms of assembly, homodimer. Forms a heterooligomer with SRGAP1 and SRGAP2 through its F-BAR domain. Interacts with WASF1. Probably interacts with ROBO1. Interacts with FASLG. As to expression, highly expressed in adult and fetal brain. Expressed at low levels in kidney. Isoform 3 is expressed in the kidney but is absent in the brain.

GTPase-activating protein for RAC1 and perhaps Cdc42, but not for RhoA small GTPase. May attenuate RAC1 signaling in neurons. This is SLIT-ROBO Rho GTPase-activating protein 3 (SRGAP3) from Homo sapiens (Human).